The primary structure comprises 232 residues: Ubiquinone biosynthesis O-methyltransferase (232 aa).

Residues arginine 36, glycine 55, aspartate 76, and leucine 120 each contribute to the S-adenosyl-L-methionine site.

This sequence belongs to the methyltransferase superfamily. UbiG/COQ3 family.

It carries out the reaction a 3-demethylubiquinol + S-adenosyl-L-methionine = a ubiquinol + S-adenosyl-L-homocysteine + H(+). The enzyme catalyses a 3-(all-trans-polyprenyl)benzene-1,2-diol + S-adenosyl-L-methionine = a 2-methoxy-6-(all-trans-polyprenyl)phenol + S-adenosyl-L-homocysteine + H(+). It functions in the pathway cofactor biosynthesis; ubiquinone biosynthesis. In terms of biological role, O-methyltransferase that catalyzes the 2 O-methylation steps in the ubiquinone biosynthetic pathway. This is Ubiquinone biosynthesis O-methyltransferase from Pseudomonas aeruginosa (strain LESB58).